We begin with the raw amino-acid sequence, 153 residues long: UPF0266 membrane protein SG1324 (153 aa).

Helical transmembrane passes span 6-26 (IGLV…EFIV), 46-66 (LDGL…ITTD), and 68-88 (KVMT…LAYI).

This sequence belongs to the UPF0266 family.

The protein resides in the cell inner membrane. The polypeptide is UPF0266 membrane protein SG1324 (Sodalis glossinidius (strain morsitans)).